A 112-amino-acid polypeptide reads, in one-letter code: ATP synthase epsilon chain (112 aa).

The protein belongs to the ATPase epsilon chain family. F-type ATPases have 2 components, CF(1) - the catalytic core - and CF(0) - the membrane proton channel. CF(1) has five subunits: alpha(3), beta(3), gamma(1), delta(1), epsilon(1). CF(0) has three main subunits: a, b and c.

The protein resides in the cell inner membrane. Its function is as follows. Produces ATP from ADP in the presence of a proton gradient across the membrane. The protein is ATP synthase epsilon chain of Rickettsia peacockii (strain Rustic).